Reading from the N-terminus, the 223-residue chain is uncharacterized protein (223 aa).

The tract at residues 117 to 148 (THAHTHAHTHGHTHTRAHSTHAHTHAHSHYHT) is disordered.

This is an uncharacterized protein from Homo sapiens (Human).